The primary structure comprises 454 residues: N-myc 2 proto-oncogene protein (454 aa).

Disordered stretches follow at residues 133–166 (EKMQ…HSGT), 231–270 (AAPP…EEEE), and 326–374 (SPYV…VRRR). The segment covering 256–270 (ALSDEVDEEEDEEEE) has biased composition (acidic residues). The span at 363–374 (RKSDSEDSVRRR) shows a compositional bias: basic and acidic residues. The region spanning 371–423 (VRRRNHNILERQRRNDLRSSFTTLRDHVPELVKNEKAAKVVILKKACEYVHYL) is the bHLH domain. A leucine-zipper region spans residues 423–444 (LQAKEHQLLMEKEKLQARQQQL).

In terms of assembly, efficient DNA binding requires dimerization with another bHLH protein.

The protein localises to the nucleus. This Otospermophilus beecheyi (California ground squirrel) protein is N-myc 2 proto-oncogene protein (N-MYC2).